Here is a 330-residue protein sequence, read N- to C-terminus: Acrylyl-CoA reductase AcuI (330 aa).

NADP(+) contacts are provided by residues tyrosine 44, alanine 159–valine 162, threonine 181–arginine 183, arginine 201, leucine 247, and serine 272.

This sequence belongs to the zinc-containing alcohol dehydrogenase family. Acrylyl-CoA reductase subfamily. As to quaternary structure, homodimer.

The protein localises to the cytoplasm. It carries out the reaction propanoyl-CoA + NADP(+) = acryloyl-CoA + NADPH + H(+). Functionally, probably catalyzes the NADPH-dependent reduction of acrylyl-CoA to propanoyl-CoA. Restores acrylate resistance when expressed in an E.coli strain K12 acuI deletion. The polypeptide is Acrylyl-CoA reductase AcuI (acuI) (Ruegeria pomeroyi (strain ATCC 700808 / DSM 15171 / DSS-3) (Silicibacter pomeroyi)).